A 243-amino-acid polypeptide reads, in one-letter code: Segregation and condensation protein A (243 aa).

The protein belongs to the ScpA family. Component of a cohesin-like complex composed of ScpA, ScpB and the Smc homodimer, in which ScpA and ScpB bind to the head domain of Smc. The presence of the three proteins is required for the association of the complex with DNA.

Its subcellular location is the cytoplasm. Its function is as follows. Participates in chromosomal partition during cell division. May act via the formation of a condensin-like complex containing Smc and ScpB that pull DNA away from mid-cell into both cell halves. The sequence is that of Segregation and condensation protein A from Staphylococcus epidermidis (strain ATCC 35984 / DSM 28319 / BCRC 17069 / CCUG 31568 / BM 3577 / RP62A).